The sequence spans 514 residues: 2,3-bisphosphoglycerate-independent phosphoglycerate mutase (514 aa).

Positions 14 and 64 each coordinate Mn(2+). The Phosphoserine intermediate role is filled by serine 64. Residues histidine 125, 155–156 (RD), arginine 187, arginine 193, 263–266 (RADR), and lysine 336 contribute to the substrate site. 5 residues coordinate Mn(2+): aspartate 403, histidine 407, aspartate 444, histidine 445, and histidine 463.

This sequence belongs to the BPG-independent phosphoglycerate mutase family. Monomer. It depends on Mn(2+) as a cofactor.

The enzyme catalyses (2R)-2-phosphoglycerate = (2R)-3-phosphoglycerate. Its pathway is carbohydrate degradation; glycolysis; pyruvate from D-glyceraldehyde 3-phosphate: step 3/5. Catalyzes the interconversion of 2-phosphoglycerate and 3-phosphoglycerate. This is 2,3-bisphosphoglycerate-independent phosphoglycerate mutase from Shewanella oneidensis (strain ATCC 700550 / JCM 31522 / CIP 106686 / LMG 19005 / NCIMB 14063 / MR-1).